A 454-amino-acid chain; its full sequence is Bifunctional protein GlmU (454 aa).

Residues 1–230 (MSGRFAVILA…LSETMGVNDR (230 aa)) form a pyrophosphorylase region. UDP-N-acetyl-alpha-D-glucosamine contacts are provided by residues 9–12 (LAAG), lysine 23, glutamine 73, and 78–79 (GT). Position 103 (aspartate 103) interacts with Mg(2+). UDP-N-acetyl-alpha-D-glucosamine is bound by residues glycine 140, glutamate 155, asparagine 170, and asparagine 228. A Mg(2+)-binding site is contributed by asparagine 228. Residues 231–251 (VALSQAEAAMRKRINEEWMRQ) are linker. Residues 252–454 (GVTIIDPQTT…NKDNYVKKDV (203 aa)) are N-acetyltransferase. Positions 333 and 351 each coordinate UDP-N-acetyl-alpha-D-glucosamine. Residue histidine 363 is the Proton acceptor of the active site. Positions 366 and 377 each coordinate UDP-N-acetyl-alpha-D-glucosamine. Residues 386–387 (NY), serine 405, alanine 423, and arginine 440 each bind acetyl-CoA.

This sequence in the N-terminal section; belongs to the N-acetylglucosamine-1-phosphate uridyltransferase family. The protein in the C-terminal section; belongs to the transferase hexapeptide repeat family. Homotrimer. It depends on Mg(2+) as a cofactor.

Its subcellular location is the cytoplasm. It carries out the reaction alpha-D-glucosamine 1-phosphate + acetyl-CoA = N-acetyl-alpha-D-glucosamine 1-phosphate + CoA + H(+). The enzyme catalyses N-acetyl-alpha-D-glucosamine 1-phosphate + UTP + H(+) = UDP-N-acetyl-alpha-D-glucosamine + diphosphate. It participates in nucleotide-sugar biosynthesis; UDP-N-acetyl-alpha-D-glucosamine biosynthesis; N-acetyl-alpha-D-glucosamine 1-phosphate from alpha-D-glucosamine 6-phosphate (route II): step 2/2. The protein operates within nucleotide-sugar biosynthesis; UDP-N-acetyl-alpha-D-glucosamine biosynthesis; UDP-N-acetyl-alpha-D-glucosamine from N-acetyl-alpha-D-glucosamine 1-phosphate: step 1/1. It functions in the pathway bacterial outer membrane biogenesis; LPS lipid A biosynthesis. Functionally, catalyzes the last two sequential reactions in the de novo biosynthetic pathway for UDP-N-acetylglucosamine (UDP-GlcNAc). The C-terminal domain catalyzes the transfer of acetyl group from acetyl coenzyme A to glucosamine-1-phosphate (GlcN-1-P) to produce N-acetylglucosamine-1-phosphate (GlcNAc-1-P), which is converted into UDP-GlcNAc by the transfer of uridine 5-monophosphate (from uridine 5-triphosphate), a reaction catalyzed by the N-terminal domain. In Shouchella clausii (strain KSM-K16) (Alkalihalobacillus clausii), this protein is Bifunctional protein GlmU.